Consider the following 91-residue polypeptide: C-C motif chemokine 5 (91 aa).

The N-terminal stretch at M1 to A23 is a signal peptide. Cystine bridges form between C33/C57 and C34/C73.

The protein belongs to the intercrine beta (chemokine CC) family.

Its subcellular location is the secreted. Chemoattractant for blood monocytes, memory T-helper cells and eosinophils. Causes the release of histamine from basophils and activates eosinophils. May activate several chemokine receptors including CCR1, CCR3, CCR4 and CCR5. May also be an agonist of the G protein-coupled receptor GPR75. Together with GPR75, may play a role in neuron survival through activation of a downstream signaling pathway involving the PI3, Akt and MAP kinases. By activating GPR75 may also play a role in insulin secretion by islet cells. This chain is C-C motif chemokine 5 (CCL5), found in Cavia porcellus (Guinea pig).